Here is a 505-residue protein sequence, read N- to C-terminus: Probable cytochrome P450 28c1 (505 aa).

Cysteine 444 is a heme binding site.

It belongs to the cytochrome P450 family. Requires heme as cofactor.

Its subcellular location is the endoplasmic reticulum membrane. The protein resides in the microsome membrane. May be involved in the metabolism of insect hormones and in the breakdown of synthetic insecticides. In Drosophila melanogaster (Fruit fly), this protein is Probable cytochrome P450 28c1 (Cyp28c1).